The chain runs to 425 residues: UDP-N-acetylglucosamine 1-carboxyvinyltransferase (425 aa).

24 to 25 (KN) contacts phosphoenolpyruvate. Position 95 (Arg95) interacts with UDP-N-acetyl-alpha-D-glucosamine. The Proton donor role is filled by Cys119. Cys119 is subject to 2-(S-cysteinyl)pyruvic acid O-phosphothioketal. UDP-N-acetyl-alpha-D-glucosamine-binding positions include 124 to 128 (RPVDQ), Asp308, and Val330.

Belongs to the EPSP synthase family. MurA subfamily.

It is found in the cytoplasm. The enzyme catalyses phosphoenolpyruvate + UDP-N-acetyl-alpha-D-glucosamine = UDP-N-acetyl-3-O-(1-carboxyvinyl)-alpha-D-glucosamine + phosphate. The protein operates within cell wall biogenesis; peptidoglycan biosynthesis. Functionally, cell wall formation. Adds enolpyruvyl to UDP-N-acetylglucosamine. The sequence is that of UDP-N-acetylglucosamine 1-carboxyvinyltransferase from Deinococcus deserti (strain DSM 17065 / CIP 109153 / LMG 22923 / VCD115).